Here is a 127-residue protein sequence, read N- to C-terminus: Protein NEGATIVE REGULATOR OF RESISTANCE (127 aa).

Disordered regions lie at residues Met-1–Val-28 and Thr-47–Ala-127. A compositionally biased stretch (low complexity) spans Pro-112 to Ala-127.

The protein belongs to the NPR1-interactor family. In terms of assembly, interacts with NPR1/NH1. Interacts with NPR3/NH3.

It is found in the nucleus. Its function is as follows. Acts as a negative regulator of disease resistance. Acts on basal resistance, age-related resistance and resistance mediated by the LRR receptor kinase XA21. Plants over-expressing NRR display enhanced susceptibility to the bacterial blight Xanthomonas oryzae pv. oryzae (Xoo). Binds to and represses NPR1/NH1-mediated transcriptional activation of LG2 in vitro. The sequence is that of Protein NEGATIVE REGULATOR OF RESISTANCE from Oryza sativa subsp. japonica (Rice).